The sequence spans 969 residues: Leucine--tRNA ligase (969 aa).

Residues 1–23 (MTESPTTSPATGSGAAAPDSDAP) are disordered. A 'HIGH' region motif is present at residues 78 to 89 (PYPSGEGLHVGH). The 'KMSKS' region motif lies at 737-741 (KIGKS). Residue Lys-740 participates in ATP binding.

Belongs to the class-I aminoacyl-tRNA synthetase family.

The protein localises to the cytoplasm. It catalyses the reaction tRNA(Leu) + L-leucine + ATP = L-leucyl-tRNA(Leu) + AMP + diphosphate. The sequence is that of Leucine--tRNA ligase from Mycobacterium avium (strain 104).